Reading from the N-terminus, the 301-residue chain is Mitochondrial carnitine/acylcarnitine carrier protein (301 aa).

A2 carries the N-acetylalanine modification. At 2 to 12 (AEEPKPISPLK) the chain is on the cytoplasmic side. 3 Solcar repeats span residues 8 to 99 (ISPL…GKRL), 108 to 196 (LTYP…LKNL), and 207 to 293 (LSVP…PMKI). A helical membrane pass occupies residues 13-31 (NLLAGGFGGVCLVFVGHPL). The Mitochondrial matrix portion of the chain corresponds to 32-73 (DTVKVRLQTQPPSLPGQPPMYSGTIDCFRKTLFREGITGLYR). A helical transmembrane segment spans residues 74 to 93 (GMAAPIIGVTPMFAVCFFGF). Topologically, residues 94–112 (GLGKRLQQKSPEDELTYPQ) are cytoplasmic. The chain crosses the membrane as a helical span at residues 113 to 131 (LFTAGMLSGVFTTGIMTPG). The Mitochondrial matrix portion of the chain corresponds to 132–170 (ERIKCLLQIQASSGKNKYSGTLDCAKKLYQEFGIRGFYK). N6-acetyllysine is present on residues K148 and K157. Residue K170 is modified to N6-acetyllysine; alternate. K170 is modified (N6-succinyllysine; alternate). A helical transmembrane segment spans residues 171 to 190 (GTALTLMRDVPASGMYFMTY). Topologically, residues 191–211 (EWLKNLFTPQGKSVHDLSVPR) are cytoplasmic. The helical transmembrane segment at 212–230 (VLVAGGFRGIFNWVVAIPP) threads the bilayer. Topologically, residues 231 to 267 (DVLKSRFQTAPPGKYPNGFRDVLRELIREEGVTSLYK) are mitochondrial matrix. Residues 268 to 287 (GFNAVMIRAFPANAACFLGF) traverse the membrane as a helical segment. Topologically, residues 288-301 (EIPMKILNWIAPNL) are cytoplasmic.

The protein belongs to the mitochondrial carrier (TC 2.A.29) family. In terms of processing, the N-terminus is blocked.

The protein localises to the mitochondrion inner membrane. It catalyses the reaction O-acetyl-(R)-carnitine(in) + (R)-carnitine(out) = O-acetyl-(R)-carnitine(out) + (R)-carnitine(in). The enzyme catalyses an O-acyl-(R)-carnitine(in) + (R)-carnitine(out) = an O-acyl-(R)-carnitine(out) + (R)-carnitine(in). It carries out the reaction O-propanoyl-(R)-carnitine(in) + (R)-carnitine(out) = O-propanoyl-(R)-carnitine(out) + (R)-carnitine(in). The catalysed reaction is O-hexadecanoyl-(R)-carnitine(in) + (R)-carnitine(out) = O-hexadecanoyl-(R)-carnitine(out) + (R)-carnitine(in). It catalyses the reaction O-octanoyl-(R)-carnitine(in) + (R)-carnitine(out) = O-octanoyl-(R)-carnitine(out) + (R)-carnitine(in). The enzyme catalyses (R)-carnitine(in) = (R)-carnitine(out). Its function is as follows. Mediates the electroneutral exchange of acylcarnitines (O-acyl-(R)-carnitine or L-acylcarnitine) of different acyl chain lengths (ranging from O-acetyl-(R)-carnitine to long-chain O-acyl-(R)-carnitines) with free carnitine ((R)-carnitine or L-carnitine) across the mitochondrial inner membrane, via a ping-pong mechanism. Key player in the mitochondrial oxidation pathway, it translocates the fatty acids in the form of acylcarnitines into the mitochondrial matrix, where the carnitine palmitoyltransferase 2 (CPT-2) activates them to undergo fatty acid beta-oxidation. Catalyzes the unidirectional transport (uniport) of carnitine at lower rates than the antiport (exchange). The sequence is that of Mitochondrial carnitine/acylcarnitine carrier protein from Rattus norvegicus (Rat).